A 594-amino-acid polypeptide reads, in one-letter code: Sucrose transport protein SUC3 (594 aa).

The residue at position 2 (Ser2) is an N-acetylserine. Residues 2–58 (SDSVSISVPYRNLRKEIELETVTKHRQNESGSSSFSESASPSNHSDSADGESVSKNC) are Cytoplasmic-facing. The disordered stretch occupies residues 23–50 (VTKHRQNESGSSSFSESASPSNHSDSAD). Residues 31–46 (SGSSSFSESASPSNHS) are compositionally biased toward low complexity. A helical transmembrane segment spans residues 59–79 (SLVTLVLSCTVAAGVQFGWAL). The Extracellular portion of the chain corresponds to 80–98 (QLSLLTPYIQTLGISHAFS). Residues 99 to 119 (SFIWLCGPITGLVVQPFVGIW) form a helical membrane-spanning segment. Residues 120 to 131 (SDKCTSKYGRRR) are Cytoplasmic-facing. The helical transmembrane segment at 132–152 (PFILVGSFMISIAVIIIGFSA) threads the bilayer. Residues 153–174 (DIGYLLGDSKEHCSTFKGTRTR) lie on the Extracellular side of the membrane. A helical membrane pass occupies residues 175–195 (AAVVFIIGFWLLDLANNTVQG). At 196 to 214 (PARALLADLSGPDQRNTAN) the chain is on the cytoplasmic side. Residues 215-235 (AVFCLWMAIGNILGFSAGASG) form a helical membrane-spanning segment. Over 236-257 (KWQEWFPFLTSRACCAACGNLK) the chain is Extracellular. Residues 258-278 (AAFLLAVVFLTICTLVTIYFA) form a helical membrane-spanning segment. The Cytoplasmic portion of the chain corresponds to 279-365 (KEIPFTSNKP…LTSLRHLPPA (87 aa)). Residues 366-386 (MHSVLIVMALTWLSWFPFFLF) form a helical membrane-spanning segment. At 387–417 (DTDWMGREVYHGDPTGDSLHMELYDQGVREG) the chain is on the extracellular side. The helical transmembrane segment at 418 to 438 (ALGLLLNSVVLGISSFLIEPM) threads the bilayer. At 439–445 (CQRMGAR) the chain is on the cytoplasmic side. Residues 446–466 (VVWALSNFTVFACMAGTAVIS) form a helical membrane-spanning segment. The Extracellular segment spans residues 467–489 (LMSLSDDKNGIEYIMRGNETTRT). Asn484 carries N-linked (GlcNAc...) asparagine glycosylation. The helical transmembrane segment at 490–510 (AAVIVFALLGFPLAITYSVPF) threads the bilayer. The Cytoplasmic portion of the chain corresponds to 511 to 525 (SVTAEVTADSGGGQG). The chain crosses the membrane as a helical span at residues 526 to 546 (LAIGVLNLAIVIPQMIVSLGA). Residues 547–555 (GPWDQLFGG) lie on the Extracellular side of the membrane. A helical transmembrane segment spans residues 556-576 (GNLPAFVLASVAAFAAGVIAL). At 577–594 (QRLPTLSSSFKSTGFHIG) the chain is on the cytoplasmic side.

It belongs to the glycoside-pentoside-hexuronide (GPH) cation symporter transporter (TC 2.A.2.4) family. As to quaternary structure, homodimer. Interacts with SUC2 and SUC4. As to expression, mostly localized in parenchymatic cells next to vascular tissues (at protein level). Present in stipules, trichomes, hydathodes and guard cells of source leaves, as well as in lateral root tips and flowers.

Its subcellular location is the cell membrane. The catalysed reaction is sucrose(out) + H(+)(out) = sucrose(in) + H(+)(in). It participates in glycan biosynthesis; sucrose metabolism. Inhibited by protonophores (e.g. dinitrophenol and carbonyl cyanide m-chlorophenyl-hydrazone (CCCP)) and SH group inhibitors (e.g. p-chloromercuribenzene sulphonic acid (PCMBS)). Functionally, responsible for the transport of sucrose into the cell, with the concomitant uptake of protons (symport system). Can also transport maltose at a lesser rate. May also transport biotin. Probably involved in carpel maturation that leads to pod shatter and seed dispersal. This is Sucrose transport protein SUC3 from Arabidopsis thaliana (Mouse-ear cress).